Here is a 195-residue protein sequence, read N- to C-terminus: SPI-2 type 3 secretion system translocon protein SctB (195 aa).

A coiled-coil region spans residues 44–80 (KLMELAKKLRDIMRSYNVEKQRLAWELQVNVLQTQMK). Helical transmembrane passes span 90–110 (MITA…GAVG), 115–135 (LIAG…GAGV), and 170–190 (EIMQ…AEIL).

Belongs to the SctB/EspB family. As to quaternary structure, the core secretion machinery of the T3SS is composed of approximately 20 different proteins, including cytoplasmic components, a base, an export apparatus and a needle. This subunit is involved in the formation of a pore, called the translocon, in host membrane. May form a complex with SseB and SseC/SctE2. SseB is required for correct localization of SseD/SctB2 on the bacterial cell surface. Binds to the chaperone SseA.

Its subcellular location is the secreted. It localises to the cell surface. The protein localises to the host membrane. Component of the type III secretion system 2 (SPI-2 T3SS), also called injectisome, which is used to inject bacterial effector proteins into eukaryotic host cells. SseC/SctE2 and SseD/SctB2 are inserted into the host membrane where they form a pore and allow the translocation of effector proteins into the cytosol of target cells. Its function is as follows. Required for the translocation of SPI-2 effector proteins. Required for systemic Salmonella infection of the mouse. Essential for SpvB-induced actin depolymerization in the host cell cytoplasm. This is SPI-2 type 3 secretion system translocon protein SctB from Salmonella typhimurium (strain LT2 / SGSC1412 / ATCC 700720).